The chain runs to 563 residues: Quinidine resistance protein 1 (563 aa).

Residues 1–10 (MTKQQTSVMR) show a composition bias toward polar residues. Residues 1–50 (MTKQQTSVMRNASIAKEEREGSDNNNVDRSSSDAISDNDAERSNSHSEID) form a disordered region. The Cytoplasmic segment spans residues 1–75 (MTKQQTSVMR…KQKMLLVVQC (75 aa)). Low complexity predominate over residues 23 to 33 (DNNNVDRSSSD). Positions 39–49 (DAERSNSHSEI) are enriched in basic and acidic residues. A helical membrane pass occupies residues 76 to 96 (AFTGFFSTVAGSIYYPVLTII). Residues 97–108 (ERKFNITEELAN) are Extracellular-facing. A helical transmembrane segment spans residues 109 to 129 (VTIVVYFIFQGVAPSIMGGLA). Over 130–135 (DTFGRR) the chain is Cytoplasmic. Residues 136-156 (PIVLWAILAYFCACIGLACAH) form a helical membrane-spanning segment. Over 157–165 (NYAQILALR) the chain is Extracellular. A helical membrane pass occupies residues 166 to 186 (CLQAAGISPVIAINSGIMGDV). At 187–195 (TTKVERGGY) the chain is on the cytoplasmic side. A helical membrane pass occupies residues 196–216 (VGLVAGFQVVGTAFGALIGAG). The Extracellular portion of the chain corresponds to 217–224 (LSSKWGWR). The helical transmembrane segment at 225-245 (AIFWFLAIGSGICLVFSTLLM) threads the bilayer. Residues 246-296 (PETKRTLVGNGSVTPRSFLNRSLILHVGSVKKTLHLDDPDPETLEPRTSVD) are Cytoplasmic-facing. Residues 297 to 317 (FLAPLKILHIREIDILLSIAG) form a helical membrane-spanning segment. At 318–341 (LQFSTWTTHQTALTIVLSKKYNLS) the chain is on the extracellular side. A helical transmembrane segment spans residues 342–362 (VAKIGLCFLPAGISTLTSIIS). The Cytoplasmic segment spans residues 363 to 421 (AGRYLNWSYRTRKVKYNRWIKEQELQLMEKYKGDKNKVAELIHSNSHYAFNLVEARLHP). Residues 422 to 442 (AFVTLLLSSIGFTAFGWCISV) form a helical membrane-spanning segment. Residues 443-445 (KTP) lie on the Extracellular side of the membrane. The helical transmembrane segment at 446 to 466 (LAAVLCTSAFASLFSNCILTF) threads the bilayer. The Cytoplasmic segment spans residues 467–481 (STTLIVDLFPSKAST). A helical transmembrane segment spans residues 482–502 (ATGCLNLFRCLLSAIFIAALT). At 503–511 (KMVEKMRYG) the chain is on the extracellular side. Residues 512–532 (GVFTFLSAITSSSSLLLFYLL) form a helical membrane-spanning segment. Topologically, residues 533 to 563 (KNGKQLSFDRIRANDKSAGRSVGKNSEKVST) are cytoplasmic.

This sequence belongs to the major facilitator superfamily. CAR1 family.

The protein resides in the cell membrane. Its function is as follows. Multidrug resistance transporter involved in resistance and adaptation to quinidine and ketoconazole. The polypeptide is Quinidine resistance protein 1 (QDR1) (Saccharomyces cerevisiae (strain ATCC 204508 / S288c) (Baker's yeast)).